The sequence spans 552 residues: Cilia- and flagella- associated protein 210 (552 aa).

Coiled coils occupy residues 53 to 143 (DEWK…NAKQ), 186 to 307 (EEQL…KKRL), 348 to 409 (IARD…VMKA), and 460 to 488 (TEALVAEKEKEFQDYAREVIELESETTNK). The disordered stretch occupies residues 216–238 (KDHLKQIKEHEEEEERRKKYEEK).

As to quaternary structure, microtubule inner protein component of sperm flagellar doublet microtubules. As to expression, expressed in airway epithelial cells.

It localises to the cytoplasm. The protein resides in the cytoskeleton. Its subcellular location is the cilium axoneme. It is found in the flagellum axoneme. Its function is as follows. Microtubule inner protein (MIP) part of the dynein-decorated doublet microtubules (DMTs) in cilia axoneme, which is required for motile cilia beating. The sequence is that of Cilia- and flagella- associated protein 210 from Homo sapiens (Human).